We begin with the raw amino-acid sequence, 174 residues long: Large ribosomal subunit protein bL17 (174 aa).

Belongs to the bacterial ribosomal protein bL17 family. As to quaternary structure, part of the 50S ribosomal subunit. Contacts protein L32.

The chain is Large ribosomal subunit protein bL17 from Ruminiclostridium cellulolyticum (strain ATCC 35319 / DSM 5812 / JCM 6584 / H10) (Clostridium cellulolyticum).